A 701-amino-acid chain; its full sequence is Interleukin-1 receptor accessory protein-like 1-A (701 aa).

The N-terminal stretch at 1-19 (MTALNPVLFLLCGVSVSLS) is a signal peptide. Residues 20 to 361 (LKVVSKRGSV…IGKRVELMYT (342 aa)) are Extracellular-facing. The Ig-like C2-type 1 domain occupies 33–133 (TDWSVDYLKY…RNSTFCMKVS (101 aa)). Cys54 and Cys121 are disulfide-bonded. N-linked (GlcNAc...) asparagine glycans are attached at residues Asn64, Asn125, Asn141, Asn216, Asn267, and Asn334. Ig-like C2-type domains lie at 146 to 235 (CYNS…TYLS) and 245 to 353 (PRIL…VQIG). An intrachain disulfide couples Cys167 to Cys219. Cys270 and Cys337 are oxidised to a cystine. Residues 362–382 (VELAGGLGAILLLLALLLSVY) form a helical membrane-spanning segment. At 383 to 701 (KCYRIELLLC…RETSISSVIW (319 aa)) the chain is on the cytoplasmic side. In terms of domain architecture, TIR spans 407–563 (KEYDAYLSYS…RFWKQLRYTM (157 aa)). The active site involves Glu495. The required for synaptic vesicle accumulation during synaptogenesis stretch occupies residues 568–701 (PQQTITNHAL…RETSISSVIW (134 aa)).

The protein belongs to the interleukin-1 receptor family.

It is found in the cell membrane. The protein resides in the cytoplasm. It carries out the reaction NAD(+) + H2O = ADP-D-ribose + nicotinamide + H(+). Its function is as follows. May regulate secretion and presynaptic differentiation through inhibition of the activity of N-type voltage-gated calcium channel. During presynaptic differentiation may regulate both synaptic vesicle accumulation in axon terminals and subsequent axon terminal remodeling. In Danio rerio (Zebrafish), this protein is Interleukin-1 receptor accessory protein-like 1-A (il1rapl1a).